The following is a 286-amino-acid chain: Phosphatidylserine decarboxylase proenzyme (286 aa).

Residues aspartate 90, histidine 147, and serine 250 each act as charge relay system; for autoendoproteolytic cleavage activity in the active site. Catalysis depends on serine 250, which acts as the Schiff-base intermediate with substrate; via pyruvic acid; for decarboxylase activity. Pyruvic acid (Ser); by autocatalysis is present on serine 250.

The protein belongs to the phosphatidylserine decarboxylase family. PSD-B subfamily. Prokaryotic type I sub-subfamily. In terms of assembly, heterodimer of a large membrane-associated beta subunit and a small pyruvoyl-containing alpha subunit. Pyruvate is required as a cofactor. Post-translationally, is synthesized initially as an inactive proenzyme. Formation of the active enzyme involves a self-maturation process in which the active site pyruvoyl group is generated from an internal serine residue via an autocatalytic post-translational modification. Two non-identical subunits are generated from the proenzyme in this reaction, and the pyruvate is formed at the N-terminus of the alpha chain, which is derived from the carboxyl end of the proenzyme. The autoendoproteolytic cleavage occurs by a canonical serine protease mechanism, in which the side chain hydroxyl group of the serine supplies its oxygen atom to form the C-terminus of the beta chain, while the remainder of the serine residue undergoes an oxidative deamination to produce ammonia and the pyruvoyl prosthetic group on the alpha chain. During this reaction, the Ser that is part of the protease active site of the proenzyme becomes the pyruvoyl prosthetic group, which constitutes an essential element of the active site of the mature decarboxylase.

The protein resides in the cell membrane. It catalyses the reaction a 1,2-diacyl-sn-glycero-3-phospho-L-serine + H(+) = a 1,2-diacyl-sn-glycero-3-phosphoethanolamine + CO2. Its pathway is phospholipid metabolism; phosphatidylethanolamine biosynthesis; phosphatidylethanolamine from CDP-diacylglycerol: step 2/2. Catalyzes the formation of phosphatidylethanolamine (PtdEtn) from phosphatidylserine (PtdSer). This is Phosphatidylserine decarboxylase proenzyme from Psychromonas ingrahamii (strain DSM 17664 / CCUG 51855 / 37).